Here is a 687-residue protein sequence, read N- to C-terminus: UvrABC system protein B (687 aa).

Residues Glu-26–Pro-414 enclose the Helicase ATP-binding domain. Gly-39–Thr-46 contacts ATP. Residues Tyr-92–Val-115 carry the Beta-hairpin motif. The Helicase C-terminal domain maps to Gln-430–Ile-596. Residues Ala-630 to Trp-665 form the UVR domain.

This sequence belongs to the UvrB family. As to quaternary structure, forms a heterotetramer with UvrA during the search for lesions. Interacts with UvrC in an incision complex.

The protein resides in the cytoplasm. In terms of biological role, the UvrABC repair system catalyzes the recognition and processing of DNA lesions. A damage recognition complex composed of 2 UvrA and 2 UvrB subunits scans DNA for abnormalities. Upon binding of the UvrA(2)B(2) complex to a putative damaged site, the DNA wraps around one UvrB monomer. DNA wrap is dependent on ATP binding by UvrB and probably causes local melting of the DNA helix, facilitating insertion of UvrB beta-hairpin between the DNA strands. Then UvrB probes one DNA strand for the presence of a lesion. If a lesion is found the UvrA subunits dissociate and the UvrB-DNA preincision complex is formed. This complex is subsequently bound by UvrC and the second UvrB is released. If no lesion is found, the DNA wraps around the other UvrB subunit that will check the other stand for damage. The chain is UvrABC system protein B from Nitrosococcus oceani (strain ATCC 19707 / BCRC 17464 / JCM 30415 / NCIMB 11848 / C-107).